The following is a 199-amino-acid chain: 7-methyl-GTP pyrophosphatase (199 aa).

D76 serves as the catalytic Proton acceptor.

Belongs to the Maf family. YceF subfamily. A divalent metal cation is required as a cofactor.

The protein resides in the cytoplasm. The catalysed reaction is N(7)-methyl-GTP + H2O = N(7)-methyl-GMP + diphosphate + H(+). Functionally, nucleoside triphosphate pyrophosphatase that hydrolyzes 7-methyl-GTP (m(7)GTP). May have a dual role in cell division arrest and in preventing the incorporation of modified nucleotides into cellular nucleic acids. This chain is 7-methyl-GTP pyrophosphatase, found in Rhizobium johnstonii (strain DSM 114642 / LMG 32736 / 3841) (Rhizobium leguminosarum bv. viciae).